The sequence spans 334 residues: Phosphoribosylformylglycinamidine cyclo-ligase (334 aa).

This sequence belongs to the AIR synthase family.

Its subcellular location is the cytoplasm. The enzyme catalyses 2-formamido-N(1)-(5-O-phospho-beta-D-ribosyl)acetamidine + ATP = 5-amino-1-(5-phospho-beta-D-ribosyl)imidazole + ADP + phosphate + H(+). The protein operates within purine metabolism; IMP biosynthesis via de novo pathway; 5-amino-1-(5-phospho-D-ribosyl)imidazole from N(2)-formyl-N(1)-(5-phospho-D-ribosyl)glycinamide: step 2/2. In Thermococcus gammatolerans (strain DSM 15229 / JCM 11827 / EJ3), this protein is Phosphoribosylformylglycinamidine cyclo-ligase.